Consider the following 297-residue polypeptide: Phosphoribosylaminoimidazole-succinocarboxamide synthase (297 aa).

Belongs to the SAICAR synthetase family.

The enzyme catalyses 5-amino-1-(5-phospho-D-ribosyl)imidazole-4-carboxylate + L-aspartate + ATP = (2S)-2-[5-amino-1-(5-phospho-beta-D-ribosyl)imidazole-4-carboxamido]succinate + ADP + phosphate + 2 H(+). It participates in purine metabolism; IMP biosynthesis via de novo pathway; 5-amino-1-(5-phospho-D-ribosyl)imidazole-4-carboxamide from 5-amino-1-(5-phospho-D-ribosyl)imidazole-4-carboxylate: step 1/2. This Rhodococcus erythropolis (strain PR4 / NBRC 100887) protein is Phosphoribosylaminoimidazole-succinocarboxamide synthase.